The chain runs to 478 residues: Serine carboxypeptidase-like 33 (478 aa).

The N-terminal stretch at 1-33 is a signal peptide; the sequence is MNLTLPMKKQKFLLIISLLILLSLLHQDYHIEA. 3 disulfide bridges follow: Cys95/Cys361, Cys257/Cys268, and Cys292/Cys330. 2 N-linked (GlcNAc...) asparagine glycosylation sites follow: Asn114 and Asn146. The active site involves Ser188. N-linked (GlcNAc...) asparagine glycans are attached at residues Asn263, Asn295, and Asn362. Active-site residues include Asp398 and His451.

The protein belongs to the peptidase S10 family. In terms of tissue distribution, expressed in senescent leaves and flowers.

It is found in the secreted. Its function is as follows. Probable carboxypeptidase. The chain is Serine carboxypeptidase-like 33 (SCPL33) from Arabidopsis thaliana (Mouse-ear cress).